A 204-amino-acid polypeptide reads, in one-letter code: Urease accessory protein UreE (204 aa).

The span at 172 to 190 (HGHAHSHDHDHDHDHDHQH) shows a compositional bias: basic and acidic residues. A disordered region spans residues 172-204 (HGHAHSHDHDHDHDHDHQHGPGCTHGHHGHDHH).

Belongs to the UreE family.

It is found in the cytoplasm. Its function is as follows. Involved in urease metallocenter assembly. Binds nickel. Probably functions as a nickel donor during metallocenter assembly. The polypeptide is Urease accessory protein UreE (Burkholderia orbicola (strain AU 1054)).